The sequence spans 554 residues: Arginine--tRNA ligase (554 aa).

Residues 129–139 carry the 'HIGH' region motif; that stretch reads ANPTGPLHIGH.

This sequence belongs to the class-I aminoacyl-tRNA synthetase family. In terms of assembly, monomer.

It localises to the cytoplasm. The enzyme catalyses tRNA(Arg) + L-arginine + ATP = L-arginyl-tRNA(Arg) + AMP + diphosphate. This is Arginine--tRNA ligase from Citrifermentans bemidjiense (strain ATCC BAA-1014 / DSM 16622 / JCM 12645 / Bem) (Geobacter bemidjiensis).